A 297-amino-acid polypeptide reads, in one-letter code: Diaminopimelate epimerase (297 aa).

Substrate is bound by residues N13, Q46, and N66. C76 (proton donor) is an active-site residue. Residues 77 to 78 (GN), N174, N207, and 225 to 226 (ER) contribute to the substrate site. C234 serves as the catalytic Proton acceptor. 235–236 (GT) contributes to the substrate binding site.

The protein belongs to the diaminopimelate epimerase family. Homodimer.

It localises to the cytoplasm. It catalyses the reaction (2S,6S)-2,6-diaminopimelate = meso-2,6-diaminopimelate. It participates in amino-acid biosynthesis; L-lysine biosynthesis via DAP pathway; DL-2,6-diaminopimelate from LL-2,6-diaminopimelate: step 1/1. In terms of biological role, catalyzes the stereoinversion of LL-2,6-diaminopimelate (L,L-DAP) to meso-diaminopimelate (meso-DAP), a precursor of L-lysine and an essential component of the bacterial peptidoglycan. The sequence is that of Diaminopimelate epimerase from Leptothrix cholodnii (strain ATCC 51168 / LMG 8142 / SP-6) (Leptothrix discophora (strain SP-6)).